A 241-amino-acid chain; its full sequence is Small ribosomal subunit protein uS3 (241 aa).

Positions 39-109 (VRNYVNKNLS…PIRINVVEVA (71 aa)) constitute a KH type-2 domain. The interval 213–241 (ADEQPTNREPQQRRRQQQRRRQQFEDRSE) is disordered.

Belongs to the universal ribosomal protein uS3 family. As to quaternary structure, part of the 30S ribosomal subunit. Forms a tight complex with proteins S10 and S14.

In terms of biological role, binds the lower part of the 30S subunit head. Binds mRNA in the 70S ribosome, positioning it for translation. This chain is Small ribosomal subunit protein uS3, found in Acaryochloris marina (strain MBIC 11017).